A 509-amino-acid polypeptide reads, in one-letter code: 2,3-bisphosphoglycerate-independent phosphoglycerate mutase (509 aa).

Asp11 serves as a coordination point for Mn(2+). The residue at position 35 (Tyr35) is a Phosphotyrosine. Ser61 is a binding site for Mn(2+). Ser61 serves as the catalytic Phosphoserine intermediate. Substrate is bound by residues His122, 152–153 (RD), Arg184, Arg190, 260–263 (RPDR), and Lys335. Residues Asp402, His406, Asp443, His444, and His461 each contribute to the Mn(2+) site.

Belongs to the BPG-independent phosphoglycerate mutase family. Monomer. Mn(2+) serves as cofactor.

The enzyme catalyses (2R)-2-phosphoglycerate = (2R)-3-phosphoglycerate. Its pathway is carbohydrate degradation; glycolysis; pyruvate from D-glyceraldehyde 3-phosphate: step 3/5. Its function is as follows. Essential for rapid growth and for sporulation. Catalyzes the interconversion of 2-phosphoglycerate and 3-phosphoglycerate. The protein is 2,3-bisphosphoglycerate-independent phosphoglycerate mutase of Bacillus anthracis.